The primary structure comprises 194 residues: uncharacterized protein (194 aa).

CBS domains are found at residues 13 to 72 (MSFP…PKDV) and 78 to 133 (MSKK…LLEI). Positions 159–192 (YINGICENCGYQGRVRLYQGRYLCDECIEEFEEK) constitute an ACP-type MB domain. Positions 164, 167, 182, and 185 each coordinate Fe cation. C164, C167, C182, and C185 together coordinate Zn(2+).

This is an uncharacterized protein from Methanocaldococcus jannaschii (strain ATCC 43067 / DSM 2661 / JAL-1 / JCM 10045 / NBRC 100440) (Methanococcus jannaschii).